A 638-amino-acid chain; its full sequence is 1-deoxy-D-xylulose-5-phosphate synthase (638 aa).

Thiamine diphosphate is bound by residues His79 and 120–122; that span reads AHS. Asp151 provides a ligand contact to Mg(2+). Residues 152–153, Asn180, Tyr289, and Glu371 contribute to the thiamine diphosphate site; that span reads GA. Asn180 contributes to the Mg(2+) binding site.

Belongs to the transketolase family. DXPS subfamily. Homodimer. Mg(2+) is required as a cofactor. Requires thiamine diphosphate as cofactor.

The catalysed reaction is D-glyceraldehyde 3-phosphate + pyruvate + H(+) = 1-deoxy-D-xylulose 5-phosphate + CO2. It functions in the pathway metabolic intermediate biosynthesis; 1-deoxy-D-xylulose 5-phosphate biosynthesis; 1-deoxy-D-xylulose 5-phosphate from D-glyceraldehyde 3-phosphate and pyruvate: step 1/1. Functionally, catalyzes the acyloin condensation reaction between C atoms 2 and 3 of pyruvate and glyceraldehyde 3-phosphate to yield 1-deoxy-D-xylulose-5-phosphate (DXP). The sequence is that of 1-deoxy-D-xylulose-5-phosphate synthase from Rhizobium etli (strain CIAT 652).